A 322-amino-acid polypeptide reads, in one-letter code: Beta-1,4-galactosyltransferase 7 (322 aa).

Residues 1 to 9 are Cytoplasmic-facing; that stretch reads MVNISTINW. The helical; Signal-anchor for type II membrane protein transmembrane segment at 10–30 threads the bilayer; that stretch reads VFVCGLSFCLGGIAVLSLMPL. At 31–322 the chain is on the lumenal side; sequence GSDCVCPLSN…TAAAASAVQT (292 aa). 4 residues coordinate UDP-alpha-D-galactose: proline 82, arginine 84, aspartate 145, and valine 146. Aspartate 147 is a binding site for Mn(2+). Tyrosine 177, glycine 185, tryptophan 207, and glycine 208 together coordinate UDP-alpha-D-galactose. Leucine 209 contributes to the beta-D-xylose binding site. UDP-alpha-D-galactose is bound at residue glutamate 210. Aspartate 211 and aspartate 212 together coordinate beta-D-xylose. A glycan (N-linked (GlcNAc...) asparagine) is linked at asparagine 236. UDP-alpha-D-galactose is bound by residues histidine 241, histidine 243, and arginine 250. Mn(2+) contacts are provided by histidine 241 and histidine 243. Cystine bridges form between cysteine 255–cysteine 310 and cysteine 300–cysteine 308.

Belongs to the glycosyltransferase 7 family. The cofactor is Mn(2+). In terms of tissue distribution, expressed in male and female adults. Expressed in head.

The protein localises to the golgi apparatus membrane. The enzyme catalyses 3-O-(beta-D-xylosyl)-L-seryl-[protein] + UDP-alpha-D-galactose = 3-O-(beta-D-galactosyl-(1-&gt;4)-beta-D-xylosyl)-L-seryl-[protein] + UDP + H(+). The protein operates within protein modification; protein glycosylation. Transfers galactose from UDP-D-Galactose (UDP-Gal) to the acceptor xylose residue in the linkage tetrasaccharide region of the glycosaminoglycan side chain of proteoglycans. No activity towards beta-GlcNAc, beta-Glc, beta-Gal, and beta-GalNAc as acceptors. In Drosophila melanogaster (Fruit fly), this protein is Beta-1,4-galactosyltransferase 7.